The chain runs to 194 residues: HTH-type transcriptional regulator BetI (194 aa).

The HTH tetR-type domain occupies 8 to 68 (PLRRRELIDA…ATMRHLLREL (61 aa)). The H-T-H motif DNA-binding region spans 31–50 (TVAQIAHEAGVSPALAHHYF).

Its pathway is amine and polyamine biosynthesis; betaine biosynthesis via choline pathway [regulation]. Repressor involved in the biosynthesis of the osmoprotectant glycine betaine. It represses transcription of the choline transporter BetT and the genes of BetAB involved in the synthesis of glycine betaine. The polypeptide is HTH-type transcriptional regulator BetI (Brucella anthropi (strain ATCC 49188 / DSM 6882 / CCUG 24695 / JCM 21032 / LMG 3331 / NBRC 15819 / NCTC 12168 / Alc 37) (Ochrobactrum anthropi)).